The primary structure comprises 433 residues: 26S proteasome regulatory subunit 7 (433 aa).

Positions 1 to 23 are disordered; the sequence is MPDYLGADQRKTKEEEKEDKPIR. Residues 8–23 are compositionally biased toward basic and acidic residues; the sequence is DQRKTKEEEKEDKPIR. 216 to 223 contributes to the ATP binding site; that stretch reads GPPGTGKT.

It belongs to the AAA ATPase family. Phosphorylated. Dephosphorylated by ublcp1 which impairs psmc2 ATPase activity and disrupts 26S proteasome assembly.

It is found in the cytoplasm. The protein localises to the nucleus. Functionally, the 26S proteasome is involved in the ATP-dependent degradation of ubiquitinated proteins. The regulatory (or ATPase) complex confers ATP dependency and substrate specificity to the 26S complex. The sequence is that of 26S proteasome regulatory subunit 7 (psmc2) from Xenopus laevis (African clawed frog).